The primary structure comprises 240 residues: Zinc import ATP-binding protein ZnuC (240 aa).

One can recognise an ABC transporter domain in the interval 1 to 219 (MSLLSIAALD…PAYRAMFGLD (219 aa)). 36-43 (GPNGSGKT) is an ATP binding site.

Belongs to the ABC transporter superfamily. Zinc importer (TC 3.A.1.15.5) family. The complex is composed of two ATP-binding proteins (ZnuC), two transmembrane proteins (ZnuB) and a solute-binding protein (ZnuA).

It localises to the cell inner membrane. It catalyses the reaction Zn(2+)(out) + ATP(in) + H2O(in) = Zn(2+)(in) + ADP(in) + phosphate(in) + H(+)(in). Its function is as follows. Part of the ABC transporter complex ZnuABC involved in zinc import. Responsible for energy coupling to the transport system. The polypeptide is Zinc import ATP-binding protein ZnuC (Chromohalobacter salexigens (strain ATCC BAA-138 / DSM 3043 / CIP 106854 / NCIMB 13768 / 1H11)).